We begin with the raw amino-acid sequence, 127 residues long: Mitochondrial pyruvate carrier 2 (127 aa).

The Mitochondrial matrix segment spans residues 2–40; that stretch reads AAAGARGLRATYHRLMDKVELLLPKKLRPLYNHPAGPRT. An N6-acetyllysine modification is found at K26. Residues 41-61 form a helical membrane-spanning segment; that stretch reads VFFWAPIMKWGLVCAGLADMA. The Mitochondrial intermembrane portion of the chain corresponds to 62-72; the sequence is RPAEKLSTAQS. The chain crosses the membrane as a helical span at residues 73–90; sequence TVLMATGFIWSRYSLVII. Topologically, residues 91–92 are mitochondrial matrix; sequence PK. The helical transmembrane segment at 93–115 threads the bilayer; sequence NWSLFAVNFFVGSAGASQLFRIW. Residues 116–127 lie on the Mitochondrial intermembrane side of the membrane; sequence RYNQELKSKGIQ.

The protein belongs to the mitochondrial pyruvate carrier (MPC) (TC 2.A.105) family. Homodimer. Homooligomer. Forms heterodimers with MPC1 and MPC1L. The heterodimer is the more stable and dominant form.

Its subcellular location is the mitochondrion inner membrane. It catalyses the reaction pyruvate(out) + H(+)(out) = pyruvate(in) + H(+)(in). In terms of biological role, mediates the uptake of pyruvate into mitochondria. This is Mitochondrial pyruvate carrier 2 (Mpc2) from Mus musculus (Mouse).